Here is a 663-residue protein sequence, read N- to C-terminus: Beta-galactosidase BgaH (663 aa).

Arg103 serves as a coordination point for substrate. Cys107 lines the Zn(2+) pocket. Asn141 contacts substrate. Glu142 serves as the catalytic Proton donor. Zn(2+) is bound by residues Cys151, Cys153, and Cys156. The active-site Nucleophile is the Glu311. Substrate is bound by residues Trp319 and 359–362; that span reads EQYH.

The protein belongs to the glycosyl hydrolase 42 family. In terms of assembly, homodimer.

It catalyses the reaction Hydrolysis of terminal non-reducing beta-D-galactose residues in beta-D-galactosides.. Requires 4 M NaCl for maximal activity. Loss of activity if DTT or beta-mercaptoethanol is omitted from buffers. Addition of 5-20 mM EDTA, 1 mM Cu(2+) or 1 mM Zn(2+) results in loss of activity. In terms of biological role, when overexpressed, cleaves several different substrates including o-nitrophenyl-beta-D-galactopyranoside (ONPG), chromogen 5-bromo-4-chloro-3-indolyl-beta-D-galactopyranoside (X-Gal) and lactulose, but not lactose. Also has beta-D-fucosidase activity. No beta-L-fucosidase, beta-glucosidase, beta-arabinosidase or beta-xylosidase activity. The chain is Beta-galactosidase BgaH from Haloferax lucentense (strain DSM 14919 / JCM 9276 / NCIMB 13854 / Aa 2.2) (Haloferax alicantei).